We begin with the raw amino-acid sequence, 329 residues long: Strigolactones hydrolase CXE15 (329 aa).

The Involved in the stabilization of the negatively charged intermediate by the formation of the oxyanion hole motif lies at 83-85 (HGG). The (-)-2'-epi-GR24 site is built by glycine 85, glycine 86, serine 169, and serine 170. Residue serine 169 is the Nucleophile of the active site. Active-site residues include glutamate 271 and histidine 302.

It belongs to the 'GDXG' lipolytic enzyme family. As to expression, expressed in axillary buds, leaves, stems, hypocotyls, flowers, siliques, and vasculatures of shoots and roots.

It localises to the nucleus. The protein resides in the cytoplasm. It is found in the cytosol. The catalysed reaction is (-)-2'-epi-GR24 + H2O = (-)-2'-epi-GR24 ABC-rings + 5-hydroxy-3-methylfuran-2(5H)-one. It carries out the reaction 5-deoxystrigol + H2O = 5-deoxystrigol ABC-rings + 5-hydroxy-3-methylfuran-2(5H)-one. The enzyme catalyses orobanchol + H2O = orobanchol ABC-rings + 5-hydroxy-3-methylfuran-2(5H)-one. Binds to strigolactones (SLs) such as (-)-2'-epi-GR24(4DO), 5-deoxystrigol (5DS) and orobanchol, and catalyzes their hydrolysis; SL are phytohormones controlling shoot branching and communications between plants and microorganisms. Promotes shoot branching by dampening SL-inhibited axillary bud outgrowth. The chain is Strigolactones hydrolase CXE15 from Arabidopsis thaliana (Mouse-ear cress).